The following is a 953-amino-acid chain: MPGKLRVHELAKQLGVTSKELLATLKDQGEFVKTASSTIEPPVVKKMKKHYESLGVTTEAPAASQEPKAKKPAAPKPAAPKPAATPQQAAKPAAPKPAAPKPAAEKKPAPKPAAKPVPKPGFSAAKAESSAPKPAAPKPAAPKPAAQSSTTATPGSMPRPQAKPAPKPGGRAPRVANNPFSSGPRPAPRPGGGNRSGNAPRPGGGPRPGGNRPQGGQGGPAERAPRPGGRGGQPRPQGGSRSQQSGGQERQGGGRRPSPAMMPTHPNPGQMPSRSNGSRNGRGGAGGQGGRPGFGGGRPGGGGSAGGRGGRRGGTAGAFGRPGGAPRKGRKSKRQKRNEYEAMQAPNVIGGVRLPDGGGATIRLARGASLSDFAEKINADAAALVQALFNLGEMVTATASVNEETLQLLGEEMNYKVEVVSPEDEDRELLESFDLQFGEDEGTEEDLAKRPPVVTVMGHVDHGKTRLLDTIRKTNVGSDEAGGITQGIGAYQVTVNIDDLSRKITFLDTPGHEAFTAMRARGAKSTDIAVLVVAADDGVMPQTVEAINHAKAADVPIVVAVNKIDKPGASPDKIRGQLTEYGLVPEEYGGDTMFVDISAKQNINIDGLLEAVLLTADASLDLRANPDMDAQGVAIEAHLDRGRGPVATVIVQRGTLRVGDSVVAGDAYGRVRRMVDEYGNDVEEAGPSRPVQMQGLNGVPGAGDNLLVVEDDRVARQIANQRNARKRNALAAKTRKRVSLEDLDSVLKETSTLNLILKGDNAGSVEALEDALLKIEVDDEVQLNIIDRGVGAVTQTNVSLAAASDAVIIAFNVRAEGKATEEANAEGVDIRYYTVIYRALEEVEQALKGMLKPIYEEREIGRAEIRAIFKASAVGLIAGCMVESGKVRRNASIRLLRDGTVVADNAKIESLRREKDDATEVAAGYECGMVLSYPDIQVGDIIEVFEQVEVPRT.

Residues 55 to 340 (GVTTEAPAAS…KSKRQKRNEY (286 aa)) form a disordered region. Low complexity predominate over residues 81–93 (KPAATPQQAAKPA). Pro residues predominate over residues 110–119 (PKPAAKPVPK). Composition is skewed to low complexity over residues 123–133 (SAAKAESSAPK) and 143–160 (KPAAQSSTTATPGSMPRP). Residues 202–219 (PGGGPRPGGNRPQGGQGG) show a composition bias toward gly residues. Residues 233 to 248 (QPRPQGGSRSQQSGGQ) show a composition bias toward low complexity. The segment covering 280-323 (NGRGGAGGQGGRPGFGGGRPGGGGSAGGRGGRRGGTAGAFGRPG) has biased composition (gly residues). The segment covering 327 to 336 (RKGRKSKRQK) has biased composition (basic residues). The 173-residue stretch at 449 to 621 (KRPPVVTVMG…VLLTADASLD (173 aa)) folds into the tr-type G domain. The interval 458 to 465 (GHVDHGKT) is G1. Residue 458-465 (GHVDHGKT) participates in GTP binding. Positions 483–487 (GITQG) are G2. Positions 508 to 511 (DTPG) are G3. Residues 508-512 (DTPGH) and 562-565 (NKID) each bind GTP. Residues 562–565 (NKID) form a G4 region. Residues 598–600 (SAK) are G5.

It belongs to the TRAFAC class translation factor GTPase superfamily. Classic translation factor GTPase family. IF-2 subfamily.

The protein localises to the cytoplasm. Its function is as follows. One of the essential components for the initiation of protein synthesis. Protects formylmethionyl-tRNA from spontaneous hydrolysis and promotes its binding to the 30S ribosomal subunits. Also involved in the hydrolysis of GTP during the formation of the 70S ribosomal complex. The protein is Translation initiation factor IF-2 of Corynebacterium diphtheriae (strain ATCC 700971 / NCTC 13129 / Biotype gravis).